Reading from the N-terminus, the 184-residue chain is Peptide deformylase 2 (184 aa).

Fe cation is bound by residues Cys-110 and His-153. The active site involves Glu-154. His-157 lines the Fe cation pocket.

The protein belongs to the polypeptide deformylase family. Fe(2+) serves as cofactor.

It catalyses the reaction N-terminal N-formyl-L-methionyl-[peptide] + H2O = N-terminal L-methionyl-[peptide] + formate. In terms of biological role, removes the formyl group from the N-terminal Met of newly synthesized proteins. Requires at least a dipeptide for an efficient rate of reaction. N-terminal L-methionine is a prerequisite for activity but the enzyme has broad specificity at other positions. This Bacillus cereus (strain ATCC 14579 / DSM 31 / CCUG 7414 / JCM 2152 / NBRC 15305 / NCIMB 9373 / NCTC 2599 / NRRL B-3711) protein is Peptide deformylase 2.